The following is a 500-amino-acid chain: Putative beta-lactamase-like 1 (500 aa).

The protein belongs to the beta-lactamase family.

In Homo sapiens (Human), this protein is Putative beta-lactamase-like 1 (LACTBL1).